The primary structure comprises 64 residues: Large ribosomal subunit protein bL35 (64 aa).

The segment covering 1-44 (MSKIKSHSGAAKRFKRTANGFKHKQSHTSHILTKKSTKRKRHLR) has biased composition (basic residues). The tract at residues 1–48 (MSKIKSHSGAAKRFKRTANGFKHKQSHTSHILTKKSTKRKRHLRSMNQ) is disordered.

Belongs to the bacterial ribosomal protein bL35 family.

The chain is Large ribosomal subunit protein bL35 from Marinomonas sp. (strain MWYL1).